The following is a 152-amino-acid chain: SXP/RAL-2 family protein Ani s 5 (152 aa).

The N-terminal stretch at 1 to 18 is a signal peptide; the sequence is MKTLIVAALFCTIGMALA. Necessary for IgE-binding stretches follow at residues 25 to 42, 49 to 54, 58 to 66, and 103 to 120; these read PPFLAGAPQDVVKAFFEL, KTDPEI, LDAWVDTLG, and KKADAELSKIAEDDSLNG. 2 igG4-binding regions span residues 49–68 and 118–137; these read KTDPEIEKDLDAWVDTLGGD and LNGIQKAQKIQAIYKTLPQS. The interval 127–146 is igE-binding and IgG4-binding; that stretch reads IQAIYKTLPQSVKDELEKGI.

It belongs to the SXP/RAL-2 family. As to quaternary structure, monomer. Excretory gland, ventriculus, and the luminal epithelium of the intestine of the larvae.

The protein localises to the secreted. The protein is SXP/RAL-2 family protein Ani s 5 of Anisakis simplex (Herring worm).